Reading from the N-terminus, the 121-residue chain is Flagellar protein FliT (121 aa).

A required for homodimerization region spans residues 1 to 50 (MNNAPHLYFAWQQLVEKSQLMLRLATEEQWDELIASEMAYVNAVQEIAHL). Residues 60–98 (MQEQLRPMLHLILDNESKVKQLLQIRMDELAKLVGQSSV) are fliD binding.

This sequence belongs to the FliT family. In terms of assembly, homodimer. Interacts with FliD and FlhC.

Its subcellular location is the cytoplasm. It localises to the cytosol. In terms of biological role, dual-function protein that regulates the transcription of class 2 flagellar operons and that also acts as an export chaperone for the filament-capping protein FliD. As a transcriptional regulator, acts as an anti-FlhDC factor; it directly binds FlhC, thus inhibiting the binding of the FlhC/FlhD complex to class 2 promoters, resulting in decreased expression of class 2 flagellar operons. As a chaperone, effects FliD transition to the membrane by preventing its premature polymerization, and by directing it to the export apparatus. This chain is Flagellar protein FliT, found in Escherichia coli O17:K52:H18 (strain UMN026 / ExPEC).